Reading from the N-terminus, the 353-residue chain is Phospho-N-acetylmuramoyl-pentapeptide-transferase (353 aa).

Transmembrane regions (helical) follow at residues 24 to 44, 66 to 86, 88 to 108, 129 to 149, 160 to 180, 192 to 212, 229 to 249, 256 to 276, 281 to 301, and 330 to 350; these read LGFFIAFFLTLFLMPKFILWA, TPTMGGIVFVFATIVASVLCA, LGNLYVLLGLIVLVGFSFVGF, FGMLFILSLIVSVLLSLKGLD, PLFEMPTMLAVGFWVLVFLST, GLASVPSIFTLLSLSIFVYVA, VGELFVVSLALVGSLFGFLWY, VFMGDSGSLALGGFIAYNAIV, ILLVLMGSIFVIETLSVILQV, and KVIVRFWIISMLSNLVALLSL.

The protein belongs to the glycosyltransferase 4 family. MraY subfamily. It depends on Mg(2+) as a cofactor.

It localises to the cell inner membrane. It carries out the reaction UDP-N-acetyl-alpha-D-muramoyl-L-alanyl-gamma-D-glutamyl-meso-2,6-diaminopimeloyl-D-alanyl-D-alanine + di-trans,octa-cis-undecaprenyl phosphate = di-trans,octa-cis-undecaprenyl diphospho-N-acetyl-alpha-D-muramoyl-L-alanyl-D-glutamyl-meso-2,6-diaminopimeloyl-D-alanyl-D-alanine + UMP. Its pathway is cell wall biogenesis; peptidoglycan biosynthesis. In terms of biological role, catalyzes the initial step of the lipid cycle reactions in the biosynthesis of the cell wall peptidoglycan: transfers peptidoglycan precursor phospho-MurNAc-pentapeptide from UDP-MurNAc-pentapeptide onto the lipid carrier undecaprenyl phosphate, yielding undecaprenyl-pyrophosphoryl-MurNAc-pentapeptide, known as lipid I. The protein is Phospho-N-acetylmuramoyl-pentapeptide-transferase of Helicobacter pylori (strain ATCC 700392 / 26695) (Campylobacter pylori).